We begin with the raw amino-acid sequence, 356 residues long: Photosynthetic reaction center cytochrome c subunit (356 aa).

The N-terminal stretch at 1–20 is a signal peptide; that stretch reads MKQLIVNSVATVALASLVAG. C21 carries the S-diacylglycerol cysteine lipid modification. Positions 94, 107, 110, 111, 130, 144, 152, 155, 156, 253, 264, 267, 268, 325, 328, and 329 each coordinate heme.

In terms of assembly, component of the photosynthetic reaction center composed of protein subunits L (PufL), M (PufM), H (PuhA) and cytochrome C (PufC). In terms of processing, binds 4 heme groups per subunit. After the signal sequence is removed, the N-terminal cysteine is modified to form a diacylglyceride thioether, but the alpha-amino group is free and is not N-palmitoylated.

It is found in the cellular chromatophore membrane. In terms of biological role, the reaction center of purple bacteria contains a tightly bound cytochrome molecule which re-reduces the photo oxidized primary electron donor. This chain is Photosynthetic reaction center cytochrome c subunit, found in Blastochloris viridis (Rhodopseudomonas viridis).